Here is a 535-residue protein sequence, read N- to C-terminus: Probable lipid II flippase MurJ (535 aa).

12 consecutive transmembrane segments (helical) span residues 90–110 (VLFT…PFIV), 131–151 (FATI…MAGM), 159–179 (FAAA…LAYA), 192–212 (DLSW…WVAV), 233–253 (LLVL…NLLI), 274–294 (IYQL…LPEL), 316–336 (FTLF…EPIV), 350–370 (TVVV…FVLI), 388–408 (IFAG…FPSL), 413–433 (IATA…ATLV), 451–471 (LVIA…WLAF), and 484–504 (LTLC…AFGI).

Belongs to the MurJ/MviN family.

It localises to the cell inner membrane. Its pathway is cell wall biogenesis; peptidoglycan biosynthesis. Its function is as follows. Involved in peptidoglycan biosynthesis. Transports lipid-linked peptidoglycan precursors from the inner to the outer leaflet of the cytoplasmic membrane. This chain is Probable lipid II flippase MurJ, found in Rhizobium meliloti (strain 1021) (Ensifer meliloti).